Here is a 159-residue protein sequence, read N- to C-terminus: Olfactory receptor-like protein COR8 (159 aa).

Topologically, residues 1 to 16 (VAICNPLLYTISMPKS) are cytoplasmic. A helical transmembrane segment spans residues 17 to 41 (LCMKLVAGSYLGGVLNSLTQTCCLL). The Extracellular portion of the chain corresponds to 42–82 (PLPFCGPNVINHYFCDTNPLLKLTCSDGRLNELLLVTFNGT). The N-linked (GlcNAc...) asparagine glycan is linked to Asn80. A helical membrane pass occupies residues 83-103 (ISMTVLLIIVISYVYILVSIL). Residues 104 to 116 (SIRSARGRHKAFS) are Cytoplasmic-facing. Residues 117–137 (TCASHLLTVTLFYVPAGLSHM) traverse the membrane as a helical segment. Over 138-148 (QPGSKYSLDME) the chain is Extracellular. The chain crosses the membrane as a helical span at residues 149–159 (KVTAVFYTLLV).

This sequence belongs to the G-protein coupled receptor 1 family.

Its subcellular location is the cell membrane. Functionally, odorant receptor. The chain is Olfactory receptor-like protein COR8 (COR8) from Gallus gallus (Chicken).